A 202-amino-acid chain; its full sequence is Heat shock 22 kDa protein, mitochondrial (202 aa).

The transit peptide at 1-31 directs the protein to the mitochondrion; that stretch reads MASSLALKRFLSSGLLSSSFLRPVASSASRS. One can recognise a sHSP domain in the interval 94–202; the sequence is VLSAASRRGW…RNNVINVKVD (109 aa).

It belongs to the small heat shock protein (HSP20) family.

It localises to the mitochondrion. The chain is Heat shock 22 kDa protein, mitochondrial (HSP22) from Pisum sativum (Garden pea).